A 499-amino-acid polypeptide reads, in one-letter code: Phenylalanine--tRNA ligase alpha subunit (499 aa).

L-phenylalanine is bound by residues Thr-333, 372–374, and Tyr-412; that span reads QIE. Mg(2+) is bound at residue Glu-414. Phe-436 serves as a coordination point for L-phenylalanine.

This sequence belongs to the class-II aminoacyl-tRNA synthetase family. Phe-tRNA synthetase alpha subunit type 2 subfamily. Tetramer of two alpha and two beta subunits. Mg(2+) serves as cofactor.

Its subcellular location is the cytoplasm. It carries out the reaction tRNA(Phe) + L-phenylalanine + ATP = L-phenylalanyl-tRNA(Phe) + AMP + diphosphate + H(+). This Thermoplasma acidophilum (strain ATCC 25905 / DSM 1728 / JCM 9062 / NBRC 15155 / AMRC-C165) protein is Phenylalanine--tRNA ligase alpha subunit.